A 225-amino-acid chain; its full sequence is Ribose-5-phosphate isomerase A (225 aa).

Substrate contacts are provided by residues 32-35 (TGST), 85-88 (DGAD), and 98-101 (KGGG). E107 (proton acceptor) is an active-site residue. K125 provides a ligand contact to substrate.

The protein belongs to the ribose 5-phosphate isomerase family. In terms of assembly, homodimer.

The enzyme catalyses aldehydo-D-ribose 5-phosphate = D-ribulose 5-phosphate. It functions in the pathway carbohydrate degradation; pentose phosphate pathway; D-ribose 5-phosphate from D-ribulose 5-phosphate (non-oxidative stage): step 1/1. Functionally, catalyzes the reversible conversion of ribose-5-phosphate to ribulose 5-phosphate. The sequence is that of Ribose-5-phosphate isomerase A from Marinobacter nauticus (strain ATCC 700491 / DSM 11845 / VT8) (Marinobacter aquaeolei).